Here is a 660-residue protein sequence, read N- to C-terminus: MRPRPILLLLLMFLPMLPAPPPGQPSGRRRGRRSGGSGGGFWGDRADSQPFAIPYIHPTNPFAPDVTAAAGAGPRVRQPARPLGSAWRDQAQRPAAASRRRPTTAGAAPLTAVAPAHDTPPVPDVDSRGAILRRQYNLSTSPLTSSVATGTNLVLYAAPLSPLLPLQDGTNTHIMATEASNYAQYRVVRATIRYRPLVPNAVGGYAISISFWPQTTTTPTSVDMNSITSTDVRILVQPGIASEHVIPSERLHYRNQGWRSVETSGVAEEEATSGLVMLCIHGSLVNSYTNTPYTGALGLLDFALELEFRNLTPGNTNTRVSRYSSTARHRLRRGADGTAELTTTAATRFMKDLYFTSTNGVGEIGRGIALTLFNLADTLLGGLPTELISSAGGQLFYSRPVVSANGEPTVKLYTSVENAQQDKGIAIPHDIDLGESRVVIQDYDNQHEQDRPTPSPAPSRPFSVLRANDVLWLSLTAAEYDQSTYGSSTGPVYVSDSVTLVNVATGAQAVARSLDWTKVTLDGRPLSTTQQYSKTFFVLPLRGKLSFWEAGTTKAGYPYNYNTTASDQLLVENAAGHRVAISTYTTSLGAGPVSISAVAVLAPHSALALLEDTMDYPARAHTFDDFCPECRPLGLQGCAFQSTVAELQRLKMKVGKTREL.

Residues 1–19 form the signal peptide; the sequence is MRPRPILLLLLMFLPMLPA. Disordered stretches follow at residues 18 to 44 and 64 to 123; these read PAPP…FWGD and PDVT…PPVP. Positions 28–33 match the Nuclear localization signal motif; that stretch reads RRRGRR. Positions 92–116 are enriched in low complexity; that stretch reads QRPAAASRRRPTTAGAAPLTAVAPA. Residues N137 and N310 are each glycosylated (N-linked (GlcNAc...) asparagine; by host). The segment at 368–394 is particle formation; that stretch reads IALTLFNLADTLLGGLPTELISSAGGQ. N-linked (GlcNAc...) asparagine; by host glycosylation is present at N562. The oligomerization stretch occupies residues 585 to 610; that stretch reads TTSLGAGPVSISAVAVLAPHSALALL.

The protein belongs to the hepevirus capsid protein family. Homodimer. In terms of assembly, self-assembles to form the capsid. The capsid is dominated by dimers that define the 30 morphological units. Interacts with phosphorylated protein ORF3. Interacts with host TMEM134. Interacts with host ASGR1 and ASGR2; these interactions facilitate infection of host hepatocytes. Post-translationally, cleaved by host proteases in the N-terminus. N-glycosylated. In terms of processing, not N-glycosylated. The C-terminus of the capsid protein ORF2 is truncated in non-enveloped virions shedded in feces, probably due to host proteases.

Its subcellular location is the secreted. It is found in the virion. The protein resides in the host cytoplasm. The protein localises to the host endoplasmic reticulum. It localises to the host Golgi apparatus. Its subcellular location is the host cell surface. It is found in the host nucleus. Functionally, plays a role in the inhibition of host antibody-mediated neutralization without blocking viral cell entry. Its function is as follows. Forms an icosahedral capsid with a T=1 symmetry and a 34 nm diameter. The capsid is composed of 60 copies linked to each other. Binds to the 5' end of the genomic RNA to mediate genome encapsidation. Binds to heparin surface proteoglycans (HSPGs) to mediate viral entry. Additionally, the interactions with host ASGR1 and ASGR2 facilitate viral infection of hepatocytes. Inhibits IFN production by blocking host TBK1-induced IRF3 phosphorylation. The nuclear form probably modulates host gene expression. This is Pro-secreted protein ORF2 from Homo sapiens (Human).